The following is a 564-amino-acid chain: Pestheic acid cluster transcriptional regulator 3 (564 aa).

The segment at residues 11-38 (CWTCRLRRKKCDEGKPECTTCQALSITC) is a DNA-binding region (zn(2)-C6 fungal-type). Positions 71–123 (RTSSRYRVPPGQKANPKLAPKVHAAASTPSTNTSHSTETTPPSDNGFYDTAES) are disordered. Residues 97–113 (STPSTNTSHSTETTPPS) are compositionally biased toward polar residues.

The protein resides in the nucleus. In terms of biological role, transcription factor that, with ptaR1 and ptaR2, coregulates the expression of the gene cluster that mediates the biosynthesis of pestheic acid, a diphenyl ether which is a biosynthetic precursor of the unique chloropupukeananes. The protein is Pestheic acid cluster transcriptional regulator 3 of Pestalotiopsis fici (strain W106-1 / CGMCC3.15140).